The sequence spans 411 residues: S-inosyl-L-homocysteine hydrolase (411 aa).

Substrate contacts are provided by D121 and E146. An NAD(+)-binding site is contributed by 147–149; that stretch reads TTT. Substrate contacts are provided by K176 and D180. NAD(+) is bound by residues N181, 210-215, E233, N268, 289-291, and N335; these read GYGWCG and SGH.

It belongs to the adenosylhomocysteinase family. NAD(+) serves as cofactor.

The protein resides in the cytoplasm. The enzyme catalyses S-inosyl-L-homocysteine + H2O = L-homocysteine + inosine. The protein operates within amino-acid biosynthesis; S-adenosyl-L-methionine biosynthesis. Catalyzes the hydrolysis of S-inosyl-L-homocysteine (SIH) to L-homocysteine (Hcy) and inosine. Likely functions in a S-adenosyl-L-methionine (SAM) recycling pathway from S-adenosyl-L-homocysteine (SAH) produced from SAM-dependent methylation reactions. Can also catalyze the reverse reaction in vitro, i.e. the synthesis of SIH from Hcy and inosine. In Methanosarcina mazei (strain ATCC BAA-159 / DSM 3647 / Goe1 / Go1 / JCM 11833 / OCM 88) (Methanosarcina frisia), this protein is S-inosyl-L-homocysteine hydrolase.